The chain runs to 477 residues: PTS system glucose-specific EIICB component (477 aa).

The PTS EIIC type-1 domain occupies 1-388 (MFKNVFSSLQ…FNLKTPGREE (388 aa)). The next 9 helical transmembrane spans lie at 20–40 (VSVL…FTLI), 51–71 (TGGS…ALGF), 76–96 (GVAA…LSAV), 112–132 (NFSD…AYMF), 152–172 (FVPI…SLIW), 250–270 (LSGG…AIWH), 280–300 (IGSI…TEPI), 304–324 (FILV…LSFP), and 354–374 (IFLF…IFYF). Residues 399 to 477 (IEIAPYIVEA…TAIDEYINNI (79 aa)) enclose the PTS EIIB type-1 domain. Catalysis depends on Cys421, which acts as the Phosphocysteine intermediate; for EIIB activity. Cys421 carries the post-translational modification Phosphocysteine.

Its subcellular location is the cell inner membrane. The enzyme catalyses N(pros)-phospho-L-histidyl-[protein] + D-glucose(out) = D-glucose 6-phosphate(in) + L-histidyl-[protein]. In terms of biological role, the phosphoenolpyruvate-dependent sugar phosphotransferase system (sugar PTS), a major carbohydrate active transport system, catalyzes the phosphorylation of incoming sugar substrates concomitantly with their translocation across the cell membrane. The enzyme II complex composed of PtsG and Crr is involved in glucose transport. The polypeptide is PTS system glucose-specific EIICB component (ptsG) (Buchnera aphidicola subsp. Schizaphis graminum (strain Sg)).